The following is a 261-amino-acid chain: tRNA (guanine-N(1)-)-methyltransferase (261 aa).

Residues G113 and 133 to 138 (IGDYVL) contribute to the S-adenosyl-L-methionine site.

The protein belongs to the RNA methyltransferase TrmD family. Homodimer.

The protein resides in the cytoplasm. The catalysed reaction is guanosine(37) in tRNA + S-adenosyl-L-methionine = N(1)-methylguanosine(37) in tRNA + S-adenosyl-L-homocysteine + H(+). Its function is as follows. Specifically methylates guanosine-37 in various tRNAs. In Xylella fastidiosa (strain M23), this protein is tRNA (guanine-N(1)-)-methyltransferase.